The primary structure comprises 1195 residues: Protein PIP82 (1195 aa).

Residues 1–10 (MSHQEQQFQH) are compositionally biased toward low complexity. Disordered regions lie at residues 1 to 55 (MSHQ…IGSS), 85 to 132 (KLRG…SQQF), 291 to 471 (NTFD…TANL), 493 to 515 (KVAK…GASG), 544 to 567 (QRNA…GHEP), 613 to 637 (EEDN…GIAT), 702 to 771 (MSPV…IVPK), 833 to 977 (SAGS…VKTS), and 1060 to 1195 (QITV…VVEI). Positions 11–26 (YPHHQHHHHHHHHHIH) are enriched in basic residues. Basic and acidic residues predominate over residues 37–50 (RSSDLEPNRSRNTD). A compositionally biased stretch (low complexity) spans 109 to 118 (GSAKDGAGAA). The segment covering 119 to 132 (QQTHLQVAGQSQQF) has biased composition (polar residues). The segment covering 300–313 (HEQFERGKISHETD) has biased composition (basic and acidic residues). The segment covering 351 to 360 (QQAAAEESPQ) has biased composition (low complexity). Pro residues predominate over residues 361–371 (ANPPPPPPPRP). The interval 400 to 450 (ETTKTAENADENNASRKLSIRQNIKRLRKSIKRPSKIKSKAAAPVPDSDEE) is phospho-regulated basic and hydrophobic (PRBH) motif. Positions 422-438 (NIKRLRKSIKRPSKIKS) are enriched in basic residues. Residues 494-505 (VAKEPEELETKA) show a composition bias toward basic and acidic residues. Positions 545–560 (RNANNQNATTSKQPKP) are enriched in polar residues. Composition is skewed to polar residues over residues 732–742 (SGPQKSMSYSP) and 856–867 (RVQSPQIGNSRE). Over residues 872 to 891 (QEEEDKEAERDSEEEEEERD) the composition is skewed to acidic residues. Composition is skewed to pro residues over residues 898-910 (SESP…PQRR) and 925-939 (VPPP…PPPS). The segment covering 940 to 968 (VETIPSVASLPSPAPVTRSMAQRSASMSR) has biased composition (low complexity). Over residues 1075-1085 (QSDQSDQSAHQ) the composition is skewed to polar residues. Basic and acidic residues predominate over residues 1086–1095 (EITDTRKTKS). Residues 1102–1111 (RQNSNCSRSE) are compositionally biased toward polar residues. Composition is skewed to low complexity over residues 1114-1149 (SPLS…QNPS) and 1179-1195 (SYYS…VVEI).

Post-translationally, phosphorylated by aPKC which lowers lipid affinity and promotes dissociation from the cell cortex. In the photoreceptor cells, aPKC-mediated phosphorylation leads to its displacement from the stalk apical cortex and thus restricts its localization to the rhabdomeric apical cortex where it functions. Dephosphorylation appears to be light-dependent. In terms of tissue distribution, restricted to photoreceptor cells (at protein level). Not detected until approximately 48hrs after puparium formation (APF) and then maintained in the photoreceptor cells post-eclosion (at protein level).

It is found in the cytoplasm. It localises to the cell cortex. The protein localises to the cytosol. Its subcellular location is the cell projection. The protein resides in the rhabdomere. In terms of biological role, required for the morphological differentiation and maintenance of the rhabdomeric photoreceptor apical domain. Acts as a downstream component of the gl and Pph13 transcriptional pathway which is required for photoreceptor cell development. Likely to function by regulating the trafficking or retention of rhabdomeric proteins including the phototransduction proteins ninaE and didum. This chain is Protein PIP82, found in Drosophila melanogaster (Fruit fly).